The sequence spans 188 residues: Archaetidylinositol phosphate synthase (188 aa).

Helical transmembrane passes span 20-40 (LASL…ITLL) and 51-71 (ILAG…GALA). Positions 64, 67, 85, and 89 each coordinate Mg(2+). The Proton acceptor role is filled by aspartate 89. A run of 2 helical transmembrane segments spans residues 96–116 (ILFG…LTLI) and 147–167 (IIII…YLVA).

Belongs to the CDP-alcohol phosphatidyltransferase class-I family. Requires Mn(2+) as cofactor. Mg(2+) serves as cofactor.

The protein localises to the cell membrane. The catalysed reaction is CDP-2,3-bis-O-(phytanyl)-sn-glycerol + 1D-myo-inositol 3-phosphate = saturated 1-archaetidyl-1D-myo-inositol 3-phosphate + CMP + H(+). It functions in the pathway lipid metabolism; phospholipid metabolism. Catalyzes the formation of archaetidylinositol phosphate (AIP) from CDP-archaeol (CDP-ArOH or CDP-2,3-bis-(O-phytanyl)-sn-glycerol) and 1L-myo-inositol 1-phosphate (IP or 1D-myo-inositol 3-phosphate). AIP is a precursor of archaetidyl-myo-inositol (AI), an ether-type inositol phospholipid ubiquitously distributed in archaea membranes and essential for glycolipid biosynthesis in archaea. The sequence is that of Archaetidylinositol phosphate synthase from Pyrococcus horikoshii (strain ATCC 700860 / DSM 12428 / JCM 9974 / NBRC 100139 / OT-3).